A 1937-amino-acid chain; its full sequence is Myosin-8 (1937 aa).

Residues 35-84 form the Myosin N-terminal SH3-like domain; sequence DAKTSVFVAEPKESYVKSTIQSKEGGKVTVKTEGGATLTVREDQVFPMNP. A phosphothreonine mark is found at Thr-66 and Thr-71. The Myosin motor domain occupies 88 to 781; sequence DKIEDMAMMT…LLGLLEEMRD (694 aa). The residue at position 132 (Lys-132) is an N6,N6,N6-trimethyllysine. 181-188 provides a ligand contact to ATP; sequence GESGAGKT. Tyr-389 bears the Phosphotyrosine mark. Ser-392 is modified (phosphoserine). Thr-419 bears the Phosphothreonine mark. Tyr-424 is subject to Phosphotyrosine. Ser-625 is subject to Phosphoserine. The actin-binding stretch occupies residues 658–680; it reads LNKLMTNLRSTHPHFVRCIIPNE. His-756 is subject to Pros-methylhistidine. The actin-binding stretch occupies residues 760–774; the sequence is KFGHTKVFFKAGLLG. Residues 781–813 enclose the IQ domain; it reads DEKLAQIITRTQAVCRGFLMRVEYQKMLQRREA. Residues 842 to 1937 are a coiled coil; the sequence is LLKSAETEKE…REVHTKISAE (1096 aa). Phosphoserine is present on residues Ser-1091 and Ser-1095. The segment at 1126 to 1146 is disordered; sequence EAERASRAKAEKQRSDLSREL. Residues 1127–1146 show a composition bias toward basic and acidic residues; it reads AERASRAKAEKQRSDLSREL. A phosphoserine mark is found at Ser-1161, Ser-1236, Ser-1242, and Ser-1260. Phosphothreonine is present on residues Thr-1264 and Thr-1285. Residues Ser-1291, Ser-1302, and Ser-1305 each carry the phosphoserine modification. Residue Tyr-1463 is modified to Phosphotyrosine. The residue at position 1466 (Thr-1466) is a Phosphothreonine. Phosphoserine is present on Ser-1473. Tyr-1491 carries the post-translational modification Phosphotyrosine. Ser-1494 carries the phosphoserine modification. A Phosphothreonine modification is found at Thr-1500. Ser-1513 carries the post-translational modification Phosphoserine. Thr-1516 carries the post-translational modification Phosphothreonine. 5 positions are modified to phosphoserine: Ser-1553, Ser-1573, Ser-1602, Ser-1713, and Ser-1725. The residue at position 1729 (Thr-1729) is a Phosphothreonine. Phosphoserine is present on Ser-1738.

It belongs to the TRAFAC class myosin-kinesin ATPase superfamily. Myosin family. As to quaternary structure, muscle myosin is a hexameric protein that consists of 2 heavy chain subunits (MHC), 2 alkali light chain subunits (MLC) and 2 regulatory light chain subunits (MLC-2).

Its subcellular location is the cytoplasm. The protein localises to the myofibril. In terms of biological role, muscle contraction. The protein is Myosin-8 (MYH8) of Homo sapiens (Human).